Reading from the N-terminus, the 77-residue chain is Liver-expressed antimicrobial peptide 2 (77 aa).

The N-terminal stretch at 1–22 (MWHLKLFAVLVICLLLAVQVHG) is a signal peptide. The propeptide occupies 23 to 37 (SPIPELSSAKRRPRR). 2 disulfides stabilise this stretch: Cys-54-Cys-65 and Cys-60-Cys-70.

The protein belongs to the LEAP2 family.

Its subcellular location is the secreted. Its function is as follows. Has an antimicrobial activity. In Sus scrofa (Pig), this protein is Liver-expressed antimicrobial peptide 2 (LEAP2).